A 379-amino-acid chain; its full sequence is Alkanesulfonate monooxygenase (379 aa).

It belongs to the SsuD family.

The enzyme catalyses an alkanesulfonate + FMNH2 + O2 = an aldehyde + FMN + sulfite + H2O + 2 H(+). Functionally, catalyzes the desulfonation of aliphatic sulfonates. This Pseudomonas syringae pv. tomato (strain ATCC BAA-871 / DC3000) protein is Alkanesulfonate monooxygenase.